Reading from the N-terminus, the 188-residue chain is FUN14 domain-containing protein 1B (188 aa).

Residues 21–41 (VVNIDGNIFSIYVCFFVCFFF) form a helical membrane-spanning segment. The short motif at 52 to 55 (YEVL) is the YXXL element. The next 3 helical transmembrane spans lie at 82 to 102 (YSVA…GFLF), 109 to 129 (AATA…GGYI), and 167 to 187 (FFKK…IGLA).

This sequence belongs to the FUN14 family.

It is found in the mitochondrion outer membrane. Functionally, acts as an activator of hypoxia-induced mitophagy, an important mechanism for mitochondrial quality control. The protein is FUN14 domain-containing protein 1B (fundc1-b) of Xenopus laevis (African clawed frog).